The primary structure comprises 204 residues: Glycerol-3-phosphate acyltransferase (204 aa).

The next 5 membrane-spanning stretches (helical) occupy residues 8 to 28 (MLVFAYLLGSINSAIIVCYIF), 53 to 73 (VPAIITLAFDILKGLVPVVLA), 81 to 101 (FITACTALYAILGHIFPIFFG), 116 to 136 (FGFSWILGLIFVVTWLCVAVI), and 155 to 175 (VIFTSDLQVATPFLIIAIIIL).

This sequence belongs to the PlsY family. Probably interacts with PlsX.

It is found in the cell inner membrane. It carries out the reaction an acyl phosphate + sn-glycerol 3-phosphate = a 1-acyl-sn-glycero-3-phosphate + phosphate. The protein operates within lipid metabolism; phospholipid metabolism. Functionally, catalyzes the transfer of an acyl group from acyl-phosphate (acyl-PO(4)) to glycerol-3-phosphate (G3P) to form lysophosphatidic acid (LPA). This enzyme utilizes acyl-phosphate as fatty acyl donor, but not acyl-CoA or acyl-ACP. This Francisella philomiragia subsp. philomiragia (strain ATCC 25017 / CCUG 19701 / FSC 153 / O#319-036) protein is Glycerol-3-phosphate acyltransferase.